The following is a 647-amino-acid chain: Carotenoid phi-ring synthase (647 aa).

FAD is bound by residues Ala67, 86–87, Lys94, and Tyr120; that span reads EA. The Rieske domain maps to 322–416; that stretch reads VASIPKREVP…VREAGEMLVI (95 aa). 4 residues coordinate [2Fe-2S] cluster: Cys362, His364, Cys380, and His383. The FAD site is built by Asp601 and Met612.

Belongs to the carotenoid/retinoid oxidoreductase family. It depends on FAD as a cofactor. Requires [2Fe-2S] cluster as cofactor.

It carries out the reaction a carotenoid beta-end derivative + 2 A = a carotenoid phi-end derivative + 2 AH2. The protein operates within carotenoid biosynthesis. In terms of biological role, involved in the biosynthesis of chlorobactene, a carotenoid with aromatic end group. Catalyzes the introduction of two additional double bonds into the ionone ring of gamma-carotene to produce chlorobactene. The reaction includes an intramolecular methyl transfer from position C1 to position C2 of the ring. The sequence is that of Carotenoid phi-ring synthase from Chlorobaculum tepidum (strain ATCC 49652 / DSM 12025 / NBRC 103806 / TLS) (Chlorobium tepidum).